An 801-amino-acid chain; its full sequence is Probable phosphoketolase (801 aa).

This sequence belongs to the XFP family. Requires thiamine diphosphate as cofactor.

In Bradyrhizobium diazoefficiens (strain JCM 10833 / BCRC 13528 / IAM 13628 / NBRC 14792 / USDA 110), this protein is Probable phosphoketolase.